The sequence spans 264 residues: Signal peptidase I (264 aa).

Residues 1 to 18 lie on the Cytoplasmic side of the membrane; it reads MNRDNTKTNKTVKQEFAS. A helical transmembrane segment spans residues 19 to 39; the sequence is FTFVICIALVIRILIMEPFTV. Over 40–264 the chain is Periplasmic; sequence PTGSMKATIL…IFKNLYNVDE (225 aa). Active-site residues include Ser43 and Lys106.

This sequence belongs to the peptidase S26 family.

It is found in the cell inner membrane. The catalysed reaction is Cleavage of hydrophobic, N-terminal signal or leader sequences from secreted and periplasmic proteins.. Functionally, complements E.coli mutants temperature-sensitive for LepB function. In Rickettsia typhi (strain ATCC VR-144 / Wilmington), this protein is Signal peptidase I (lepB).